Here is a 432-residue protein sequence, read N- to C-terminus: Protein ABHD8 (432 aa).

2 disordered regions span residues 47–69 (KHAGPAPAPTPPPPLSDAAQGDQ) and 121–149 (PAGSDGRSVPGSAGSGSGGRRRRARRPKR). Pro residues predominate over residues 52–61 (APAPTPPPPL). The span at 139 to 149 (GRRRRARRPKR) shows a compositional bias: basic residues. The region spanning 170-272 (VLFFIHGVGG…HKVIMINGGG (103 aa)) is the AB hydrolase-1 domain. Active-site charge relay system residues include serine 245, aspartate 363, and histidine 391.

The protein belongs to the AB hydrolase superfamily. Interacts with NLRP3 (via NACHT and LLR domains); this interaction is enhanced in the presence of NLRP3 inflammasome inducers, such as ATP, nigericin, silica, or alum. Interacts with ZDHHC12.

The protein resides in the cytoplasm. In terms of biological role, negatively regulates NLRP3-driven inflammation. Promotes NLRP3 degradation through the chaperone-mediated autophagy (CMA) pathway, hence attenuating inflammasome activation and IL1B secretion. Acts by recruiting palmitoyltransferase ZDHHC12 to NLRP3, facilitating NLRP3 palmitoylation and subsequent degradation. The chain is Protein ABHD8 from Bos taurus (Bovine).